The following is a 342-amino-acid chain: Erlin-1 (342 aa).

Topologically, residues 1–6 (MAHVGA) are cytoplasmic. A helical transmembrane segment spans residues 7-23 (VVAAMAGLMAILLHSSI). The Lumenal portion of the chain corresponds to 24–342 (HKIEEGHLAV…ASKPKASEGH (319 aa)). Asparagine 106 carries N-linked (GlcNAc...) asparagine glycosylation. The disordered stretch occupies residues 308–342 (SSASRPAAGESEQLESLSMRESLKKASKPKASEGH).

The protein belongs to the band 7/mec-2 family.

The protein resides in the endoplasmic reticulum membrane. Functionally, mediates the endoplasmic reticulum-associated degradation (ERAD) of inositol 1,4,5-trisphosphate receptors (IP3Rs). Involved in regulation of cellular cholesterol homeostasis by regulation the SREBP signaling pathway. Binds cholesterol and may promote ER retention of the SCAP-SREBF complex. This chain is Erlin-1, found in Danio rerio (Zebrafish).